Consider the following 326-residue polypeptide: tRNA uridine(34) hydroxylase (326 aa).

The region spanning 123–217 (ADPEVFVVDT…YLEEVPEEES (95 aa)) is the Rhodanese domain. Catalysis depends on C177, which acts as the Cysteine persulfide intermediate. Positions 293 to 326 (AVRGEQHVGGESAKQRQQRRAEKLAKKDVQRKQA) are disordered. Over residues 311-326 (RRAEKLAKKDVQRKQA) the composition is skewed to basic and acidic residues.

The protein belongs to the TrhO family.

The enzyme catalyses uridine(34) in tRNA + AH2 + O2 = 5-hydroxyuridine(34) in tRNA + A + H2O. Catalyzes oxygen-dependent 5-hydroxyuridine (ho5U) modification at position 34 in tRNAs. The protein is tRNA uridine(34) hydroxylase of Vibrio campbellii (strain ATCC BAA-1116).